The primary structure comprises 914 residues: Solute carrier family 12 member 9 (914 aa).

Topologically, residues 1–36 (MASESSPLLAYRLLGEEGVALPANGAGGPGGASARK) are cytoplasmic. Position 6 is a phosphoserine (serine 6). A helical transmembrane segment spans residues 37–57 (LSTFLGVVVPTVLSMFSIVVF). Residues 58 to 72 (LRIGFVVGHAGLLQA) lie on the Extracellular side of the membrane. A helical transmembrane segment spans residues 73–93 (LAMLLVAYFILALTVLSVCAI). At 94–119 (ATNGAVQGGGAYFMISRTLGPEVGGS) the chain is on the cytoplasmic side. The helical transmembrane segment at 120–140 (IGLMFYLANVCGCAVSLLGLV) threads the bilayer. Residues 141 to 167 (ESVLDVFGADATGPSGLRVLPQGYGWN) are Extracellular-facing. A helical membrane pass occupies residues 168–188 (LLYGSLLLGLVGGVCTLGAGL). The Cytoplasmic portion of the chain corresponds to 189 to 193 (YARAS). A helical membrane pass occupies residues 194-214 (FLTFLLVSGSLASVLISFVAV). Over 215 to 262 (GPRDIRLTPRPGPNGSSLPPRFGHFTGFNSSTLKDNLGAGYAEDYTTG) the chain is Extracellular. 2 N-linked (GlcNAc...) asparagine glycosylation sites follow: asparagine 228 and asparagine 243. Residues 263–283 (AVMNFASVFAVLFNGCTGIMA) traverse the membrane as a helical segment. Residues 284 to 297 (GANMSGELKDPSRA) are Cytoplasmic-facing. Residues 298 to 318 (IPLGTIVAVAYTFFVYVLLFF) traverse the membrane as a helical segment. Over 319 to 338 (LSSFTCDRTLLQEDYGFFRA) the chain is Extracellular. The helical transmembrane segment at 339–359 (ISLWPPLVLIGIYATALSASM) threads the bilayer. The Cytoplasmic portion of the chain corresponds to 360 to 390 (SSLIGASRILHALARDDLFGVILAPAKVVSR). A helical membrane pass occupies residues 391–411 (GGNPWAAVLYSWGLVQLVLLA). The Extracellular segment spans residues 412 to 416 (GKLNT). A helical membrane pass occupies residues 417–437 (LAAVVTVFYLVAYAAVDLSCL). Residues 438 to 466 (SLEWASAPNFRPTFSLFSWHTCLLGVASC) are Cytoplasmic-facing. Residues 467–487 (LLMMFLISPGAAGGSLLLMGL) form a helical membrane-spanning segment. At 488 to 740 (LAALLTARGG…LLRPRGGPGY (253 aa)) the chain is on the extracellular side. The interval 642–678 (LTDPAFSEPADSTREGSSPALSTLFPPPRAPGSPRAL) is disordered. The helical transmembrane segment at 741–761 (VDVCGLFLLQMATILGMVPAW) threads the bilayer. Residues 762–914 (HSARLRIFLC…GVTPVTCTDL (153 aa)) are Cytoplasmic-facing. The interval 844 to 863 (QQGRGTGGGPGGPEGGDAEG) is disordered. Gly residues predominate over residues 847 to 858 (RGTGGGPGGPEG).

The protein belongs to the SLC12A transporter family. In terms of assembly, interacts with SLC12A1. As to expression, highly expressed in placenta, brain and kidney. Lower expression in lung, liver and heart.

The protein resides in the cell membrane. Its subcellular location is the lysosome membrane. Its function is as follows. May be an inhibitor of SLC12A1. Seems to correspond to a subunit of a multimeric transport system and thus, additional subunits may be required for its function. May play a role in lysosomal ion flux and osmoregulation. In Homo sapiens (Human), this protein is Solute carrier family 12 member 9 (SLC12A9).